The sequence spans 154 residues: Ribonuclease H (154 aa).

In terms of domain architecture, RNase H type-1 spans 1-142 (MEKTVEIYTD…VDDLARDAAG (142 aa)). Mg(2+) contacts are provided by Asp-10, Glu-48, Asp-70, and Asp-134.

Belongs to the RNase H family. Monomer. Requires Mg(2+) as cofactor.

Its subcellular location is the cytoplasm. It carries out the reaction Endonucleolytic cleavage to 5'-phosphomonoester.. In terms of biological role, endonuclease that specifically degrades the RNA of RNA-DNA hybrids. The sequence is that of Ribonuclease H from Pseudoalteromonas translucida (strain TAC 125).